A 286-amino-acid chain; its full sequence is Sulfate transport system permease protein CysT (286 aa).

Transmembrane regions (helical) follow at residues 27-47 (WVVTIIYLLLILVLPIAALLV), 74-94 (FITALAAGLVNGVMGTLVAWV), 108-128 (AMVDLPFALPTSVAGLVLATL), 146-166 (IAFSRLGVFVAMVFISLPFIV), 195-215 (FWRVIFPPLIPPILTGIALGF), 224-244 (SVVLIASNIPFKDLIAPVLVF), and 257-276 (VIGAVLLSVSLILLLIINLL). One can recognise an ABC transmembrane type-1 domain in the interval 70–273 (YNVTFITALA…SVSLILLLII (204 aa)).

Belongs to the binding-protein-dependent transport system permease family. CysTW subfamily. In terms of assembly, the complex is composed of two ATP-binding proteins (CysA), two transmembrane proteins (CysT and CysW) and a solute-binding protein (CysP).

Its subcellular location is the cell inner membrane. Functionally, part of the ABC transporter complex CysAWTP (TC 3.A.1.6.1) involved in sulfate/thiosulfate import. Probably responsible for the translocation of the substrate across the membrane. The sequence is that of Sulfate transport system permease protein CysT (cysT) from Synechocystis sp. (strain ATCC 27184 / PCC 6803 / Kazusa).